The following is a 206-amino-acid chain: Large ribosomal subunit protein uL4 (206 aa).

Residues 48–78 are disordered; it reads THSVKTRGHVSGGGAKPWRQKGTGRARAGSN.

The protein belongs to the universal ribosomal protein uL4 family. In terms of assembly, part of the 50S ribosomal subunit.

Its function is as follows. One of the primary rRNA binding proteins, this protein initially binds near the 5'-end of the 23S rRNA. It is important during the early stages of 50S assembly. It makes multiple contacts with different domains of the 23S rRNA in the assembled 50S subunit and ribosome. In terms of biological role, forms part of the polypeptide exit tunnel. This is Large ribosomal subunit protein uL4 from Lawsonia intracellularis (strain PHE/MN1-00).